The sequence spans 172 residues: Large ribosomal subunit protein uL10 (172 aa).

This sequence belongs to the universal ribosomal protein uL10 family. As to quaternary structure, part of the ribosomal stalk of the 50S ribosomal subunit. The N-terminus interacts with L11 and the large rRNA to form the base of the stalk. The C-terminus forms an elongated spine to which L12 dimers bind in a sequential fashion forming a multimeric L10(L12)X complex.

Functionally, forms part of the ribosomal stalk, playing a central role in the interaction of the ribosome with GTP-bound translation factors. This chain is Large ribosomal subunit protein uL10, found in Caulobacter sp. (strain K31).